A 219-amino-acid polypeptide reads, in one-letter code: Large ribosomal subunit protein mL67 (219 aa).

This sequence belongs to the mitochondrion-specific ribosomal protein mL67 family.

The protein resides in the nucleus. Its subcellular location is the mitochondrion. In terms of biological role, transcription factor involved in regulation of RNA polymerase II-dependent transcription. Also involved in regulation of mitochondrial DNA recombination, maintenance and repair, and generation of homoplasmic cells. This Kluyveromyces lactis (strain ATCC 8585 / CBS 2359 / DSM 70799 / NBRC 1267 / NRRL Y-1140 / WM37) (Yeast) protein is Large ribosomal subunit protein mL67 (MHR1).